A 251-amino-acid polypeptide reads, in one-letter code: Protein FAM216A (251 aa).

Residues 1–16 show a composition bias toward polar residues; that stretch reads MPNQGPVSDWTECSSS. A disordered region spans residues 1–49; that stretch reads MPNQGPVSDWTECSSSAEPPAVARAEGGGGGSAGHSYYQNSKDRIKDGH.

The protein belongs to the FAM216 family.

The chain is Protein FAM216A (FAM216A) from Bos taurus (Bovine).